A 375-amino-acid chain; its full sequence is Negative elongation factor E (375 aa).

Residues glycine 7–serine 36 are a coiled coil. A disordered region spans residues leucine 30 to threonine 58. Residue serine 51 is modified to Phosphoserine. Lysine 78 is covalently cross-linked (Glycyl lysine isopeptide (Lys-Gly) (interchain with G-Cter in SUMO1); alternate). Residue lysine 78 forms a Glycyl lysine isopeptide (Lys-Gly) (interchain with G-Cter in SUMO2); alternate linkage. Residues alanine 79 to proline 262 form a disordered region. Residue lysine 82 forms a Glycyl lysine isopeptide (Lys-Gly) (interchain with G-Cter in SUMO2) linkage. Residues arginine 90–lysine 101 show a composition bias toward basic and acidic residues. Residues serine 113 and serine 115 each carry the phosphoserine modification. Glutamate 122 carries the polyADP-ribosyl glutamic acid modification. Residues serine 131 and serine 139 each carry the phosphoserine modification. PolyADP-ribosyl glutamic acid is present on glutamate 151. Residues alanine 155–aspartate 167 are compositionally biased toward low complexity. Residue glutamate 172 is modified to PolyADP-ribosyl glutamic acid. Phosphoserine occurs at positions 179, 181, 185, and 187. Tandem repeats lie at residues arginine 184–serine 185, arginine 186–serine 187, arginine 188–aspartate 189, and arginine 190–serine 191. A 32 X 2 AA approximate tandem repeats of R-[DSE] region spans residues arginine 184–glutamate 247. Positions arginine 186–arginine 260 are enriched in basic and acidic residues. Residue serine 191 is modified to Phosphoserine. The 5; approximate repeat unit spans residues histidine 192–aspartate 193. 4 tandem repeats follow at residues arginine 194–serine 195, arginine 196–aspartate 197, arginine 198–aspartate 199, and arginine 200–aspartate 201. One copy of the 10; approximate repeat lies at lysine 202–glutamate 203. 7 tandem repeats follow at residues arginine 204 to aspartate 205, arginine 206 to aspartate 207, arginine 208 to aspartate 209, arginine 210 to aspartate 211, arginine 212 to aspartate 213, arginine 214 to aspartate 215, and arginine 216 to aspartate 217. The 18; approximate repeat unit spans residues lysine 218–aspartate 219. The stretch at lysine 220–aspartate 221 is one 19; approximate repeat. Repeat copies occupy residues arginine 222–aspartate 223, arginine 224–aspartate 225, arginine 226–aspartate 227, and arginine 228–aspartate 229. Residues lysine 230–glutamate 231 form a 24; approximate repeat. 8 consecutive repeat copies span residues arginine 232–aspartate 233, arginine 234–aspartate 235, arginine 236–aspartate 237, arginine 238–aspartate 239, arginine 240–aspartate 241, arginine 242–glutamate 243, arginine 244–aspartate 245, and arginine 246–glutamate 247. A phosphoserine mark is found at serine 253 and serine 255. The RRM domain maps to asparagine 266 to lysine 336. Phosphothreonine occurs at positions 276 and 278. A phosphoserine mark is found at serine 285 and serine 357.

This sequence belongs to the RRM NELF-E family. The NELF complex is composed of NELFA, NELFB, NELFCD and NELFE. Interacts with NELFB. Post-translationally, phosphorylated by the P-TEFb complex at sites next to its RNA recognition motif, promoting its release from chromatin. In terms of processing, sumoylated. Poly-ADP-ribosylated by PARP1, thereby preventing RNA-binding and relieving transcription pausing.

The protein localises to the nucleus. It is found in the chromosome. In terms of biological role, essential component of the NELF complex, a complex that negatively regulates the elongation of transcription by RNA polymerase II. The NELF complex, which acts via an association with the DSIF complex and causes transcriptional pausing, is counteracted by the P-TEFb kinase complex. Provides the strongest RNA binding activity of the NELF complex and may initially recruit the NELF complex to RNA. This chain is Negative elongation factor E (Nelfe), found in Mus musculus (Mouse).